A 467-amino-acid chain; its full sequence is ATP synthase subunit beta (467 aa).

150–157 (GGAGVGKT) is a binding site for ATP.

This sequence belongs to the ATPase alpha/beta chains family. F-type ATPases have 2 components, CF(1) - the catalytic core - and CF(0) - the membrane proton channel. CF(1) has five subunits: alpha(3), beta(3), gamma(1), delta(1), epsilon(1). CF(0) has three main subunits: a(1), b(2) and c(9-12). The alpha and beta chains form an alternating ring which encloses part of the gamma chain. CF(1) is attached to CF(0) by a central stalk formed by the gamma and epsilon chains, while a peripheral stalk is formed by the delta and b chains.

Its subcellular location is the cell inner membrane. The catalysed reaction is ATP + H2O + 4 H(+)(in) = ADP + phosphate + 5 H(+)(out). Its function is as follows. Produces ATP from ADP in the presence of a proton gradient across the membrane. The catalytic sites are hosted primarily by the beta subunits. In Polaromonas sp. (strain JS666 / ATCC BAA-500), this protein is ATP synthase subunit beta.